We begin with the raw amino-acid sequence, 122 residues long: LYR motif-containing protein 1 (122 aa).

The protein belongs to the complex I LYR family.

Its function is as follows. May promote cell proliferation and inhibition of apoptosis of preadipocytes. This Mus musculus (Mouse) protein is LYR motif-containing protein 1 (Lyrm1).